Reading from the N-terminus, the 361-residue chain is Molybdenum import ATP-binding protein ModC (361 aa).

Positions 1–228 (MLNINIEKQL…EQMRPWVPLQ (228 aa)) constitute an ABC transporter domain. 31–38 (GRSGAGKT) contributes to the ATP binding site. Residues 289 to 356 (GSSVRNLLRG…IKGVTMTQMD (68 aa)) enclose the Mop domain.

The protein belongs to the ABC transporter superfamily. Molybdate importer (TC 3.A.1.8) family. In terms of assembly, the complex is composed of two ATP-binding proteins (ModC), two transmembrane proteins (ModB) and a solute-binding protein (ModA).

It localises to the cell inner membrane. It catalyses the reaction molybdate(out) + ATP + H2O = molybdate(in) + ADP + phosphate + H(+). Functionally, part of the ABC transporter complex ModABC involved in molybdenum import. Responsible for energy coupling to the transport system. The polypeptide is Molybdenum import ATP-binding protein ModC (Shewanella sp. (strain MR-7)).